We begin with the raw amino-acid sequence, 92 residues long: Small ribosomal subunit protein uS19c (92 aa).

The protein belongs to the universal ribosomal protein uS19 family.

The protein localises to the plastid. The protein resides in the chloroplast. Functionally, protein S19 forms a complex with S13 that binds strongly to the 16S ribosomal RNA. In Marchantia polymorpha (Common liverwort), this protein is Small ribosomal subunit protein uS19c (rps19).